The following is a 158-amino-acid chain: Succinate dehydrogenase assembly factor 2, mitochondrial (158 aa).

The N-terminal 23 residues, 1 to 23 (MLRQLLATARRLLLPLATPKRCL), are a transit peptide targeting the mitochondrion.

The protein belongs to the SDHAF2 family. As to quaternary structure, interacts with the flavoprotein subunit within the SDH catalytic dimer.

The protein localises to the mitochondrion matrix. Its function is as follows. Plays an essential role in the assembly of succinate dehydrogenase (SDH), an enzyme complex (also referred to as respiratory complex II) that is a component of both the tricarboxylic acid (TCA) cycle and the mitochondrial electron transport chain, and which couples the oxidation of succinate to fumarate with the reduction of ubiquinone (coenzyme Q) to ubiquinol. Required for flavinylation (covalent attachment of FAD) of the flavoprotein subunit of the SDH catalytic dimer. The polypeptide is Succinate dehydrogenase assembly factor 2, mitochondrial (Drosophila virilis (Fruit fly)).